A 780-amino-acid chain; its full sequence is Translation initiation factor IF-2 (780 aa).

The interval 44–194 (RQLDNAVDGT…TPPKPKELPE (151 aa)) is disordered. Basic and acidic residues predominate over residues 53-65 (TNKKAEAPKKETT). Residues 66-81 (SNENGNSKGPNKPNMT) show a composition bias toward polar residues. Low complexity-rich tracts occupy residues 82–93 (NSNEKSNKPNKP) and 117–168 (ANTS…NNKG). One can recognise a tr-type G domain in the interval 281–450 (ERPPVVTIMG…LLVSEVEELK (170 aa)). A G1 region spans residues 290-297 (GHVDHGKT). 290-297 (GHVDHGKT) lines the GTP pocket. Residues 315–319 (GITQH) form a G2 region. Residues 336-339 (DTPG) form a G3 region. Residues 336 to 340 (DTPGH) and 390 to 393 (NKID) contribute to the GTP site. Residues 390 to 393 (NKID) are G4. Residues 426–428 (SAK) are G5.

Belongs to the TRAFAC class translation factor GTPase superfamily. Classic translation factor GTPase family. IF-2 subfamily.

It localises to the cytoplasm. Functionally, one of the essential components for the initiation of protein synthesis. Protects formylmethionyl-tRNA from spontaneous hydrolysis and promotes its binding to the 30S ribosomal subunits. Also involved in the hydrolysis of GTP during the formation of the 70S ribosomal complex. The protein is Translation initiation factor IF-2 of Listeria welshimeri serovar 6b (strain ATCC 35897 / DSM 20650 / CCUG 15529 / CIP 8149 / NCTC 11857 / SLCC 5334 / V8).